The sequence spans 586 residues: Ezrin (586 aa).

One can recognise an FERM domain in the interval proline 2–lysine 296. Lysine 60 is modified (N6-acetyllysine). Positions isoleucine 115 to glutamate 120 match the [IL]-x-C-x-x-[DE] motif motif. Tyrosine 146 carries the post-translational modification Phosphotyrosine; by PDGFR. Residues glutamate 244–leucine 586 form an interaction with SCYL3 region. Positions valine 302–glutamate 462 form a coiled coil. Residues lysine 306–methionine 341 form a disordered region. The span at glutamine 308–methionine 341 shows a compositional bias: basic and acidic residues. Tyrosine 354 carries the post-translational modification Phosphotyrosine; by PDGFR. Residue serine 366 is modified to Phosphoserine. At tyrosine 478 the chain carries Phosphotyrosine. The interval valine 485–lysine 564 is disordered. Residues glycine 507–glutamine 528 are compositionally biased toward basic and acidic residues. Polar residues predominate over residues glutamine 530–serine 539. Serine 535 carries the phosphoserine modification. Residues glutamine 540–lysine 564 show a composition bias toward basic and acidic residues. Phosphothreonine; by ROCK2 and PKC/PRKCI is present on threonine 567.

As to quaternary structure, monomer. Homodimer. Interacts with PALS1 and NHERF2. Found in a complex with EZR, PODXL and NHERF2. Interacts with MCC, PLEKHG6, PODXL, SCYL3/PACE1, NHERF1 and TMEM8B. Interacts (when phosphorylated) with FES/FPS. Interacts with dimeric S100P, the interaction may be activating through unmasking of F-actin binding sites. Identified in complexes that contain VIM, EZR, AHNAK, BFSP1, BFSP2, ANK2, PLEC, PRX and spectrin. Detected in a complex composed of at least EZR, AHNAK, PPL and PRX. Interacts with PDPN (via cytoplasmic domain); activates RHOA and promotes epithelial-mesenchymal transition. Interacts with SPN/CD43 cytoplasmic tail, CD44 and ICAM2. Interacts with SLC9A3; interaction targets SLC9A3 to the apical membrane. Interacts with SLC9A1; regulates interactions of SLC9A1 with cytoskeletal and promotes stress fiber formation. Interacts with CLIC5; may work together in a complex which also includes RDX and MYO6 to stabilize linkages between the plasma membrane and subjacent actin cytoskeleton at the base of stereocilia. Phosphorylated by tyrosine-protein kinases. Phosphorylation by ROCK2 suppresses the head-to-tail association of the N-terminal and C-terminal halves resulting in an opened conformation which is capable of actin and membrane-binding. Post-translationally, S-nitrosylation is induced by interferon-gamma and oxidatively-modified low-densitity lipoprotein (LDL(ox)) possibly implicating the iNOS-S100A8/9 transnitrosylase complex. In terms of tissue distribution, expressed in cerebral cortex, basal ganglia, hippocampus, hypophysis, and optic nerve. Weakly expressed in brain stem and diencephalon. Stronger expression was detected in gray matter of frontal lobe compared to white matter (at protein level). Component of the microvilli of intestinal epithelial cells. Preferentially expressed in astrocytes of hippocampus, frontal cortex, thalamus, parahippocampal cortex, amygdala, insula, and corpus callosum. Not detected in neurons in most tissues studied.

It is found in the apical cell membrane. The protein localises to the cell projection. Its subcellular location is the microvillus membrane. The protein resides in the ruffle membrane. It localises to the cytoplasm. It is found in the cell cortex. The protein localises to the cytoskeleton. Its subcellular location is the microvillus. Its activity is regulated as follows. A head-to-tail association, of the N-terminal and C-terminal halves results in a closed conformation (inactive form) which is incapable of actin or membrane-binding. Functionally, probably involved in connections of major cytoskeletal structures to the plasma membrane. In epithelial cells, required for the formation of microvilli and membrane ruffles on the apical pole. Along with PLEKHG6, required for normal macropinocytosis. This is Ezrin (EZR) from Homo sapiens (Human).